A 475-amino-acid chain; its full sequence is Aspartyl/glutamyl-tRNA(Asn/Gln) amidotransferase subunit B (475 aa).

This sequence belongs to the GatB/GatE family. GatB subfamily. As to quaternary structure, heterotrimer of A, B and C subunits.

The enzyme catalyses L-glutamyl-tRNA(Gln) + L-glutamine + ATP + H2O = L-glutaminyl-tRNA(Gln) + L-glutamate + ADP + phosphate + H(+). The catalysed reaction is L-aspartyl-tRNA(Asn) + L-glutamine + ATP + H2O = L-asparaginyl-tRNA(Asn) + L-glutamate + ADP + phosphate + 2 H(+). Allows the formation of correctly charged Asn-tRNA(Asn) or Gln-tRNA(Gln) through the transamidation of misacylated Asp-tRNA(Asn) or Glu-tRNA(Gln) in organisms which lack either or both of asparaginyl-tRNA or glutaminyl-tRNA synthetases. The reaction takes place in the presence of glutamine and ATP through an activated phospho-Asp-tRNA(Asn) or phospho-Glu-tRNA(Gln). This is Aspartyl/glutamyl-tRNA(Asn/Gln) amidotransferase subunit B from Staphylococcus aureus (strain bovine RF122 / ET3-1).